The following is a 247-amino-acid chain: Probable transcriptional regulatory protein Glov_1245 (247 aa).

Belongs to the TACO1 family.

The protein resides in the cytoplasm. This chain is Probable transcriptional regulatory protein Glov_1245, found in Trichlorobacter lovleyi (strain ATCC BAA-1151 / DSM 17278 / SZ) (Geobacter lovleyi).